The sequence spans 241 residues: Oil body-associated protein 1B (241 aa).

Positions 1–12 are enriched in polar residues; sequence MEKAVHSSTTSG. A disordered region spans residues 1–22; it reads MEKAVHSSTTSGPAVPGETTKT.

Belongs to the OBAP family.

The chain is Oil body-associated protein 1B from Arabidopsis thaliana (Mouse-ear cress).